Consider the following 379-residue polypeptide: Fucose-specific lectin g276 (379 aa).

An alpha-L-fucose-binding site is contributed by E126. 3 residues coordinate beta-L-fucose: E126, R163, and W185. Residues W185, R222, and E234 each contribute to the alpha-L-fucose site. W242 and E282 together coordinate beta-L-fucose. W289 contacts alpha-L-fucose.

This sequence belongs to the fungal fucose-specific lectin family.

Functionally, lectin that specifically binds to L-fucose. Is associated with the morphogenesis of the fungus, and plays a role in the formation of the constricting rings involved in nematode-trapping. This Arthrobotrys oligospora (strain ATCC 24927 / CBS 115.81 / DSM 1491) (Nematode-trapping fungus) protein is Fucose-specific lectin g276.